The sequence spans 845 residues: Meiotically up-regulated gene 4 protein (845 aa).

Residues 122–158 (LSTTDEQPKEPSIISISSSSSDPSSSPPPSSSLLKTP) are disordered. Over residues 132 to 145 (PSIISISSSSSDPS) the composition is skewed to low complexity. Residues 726-746 (FLVFLTFTGMTLFILYQLTFP) traverse the membrane as a helical segment.

It localises to the membrane. Has a role in meiosis. The chain is Meiotically up-regulated gene 4 protein (mug4) from Schizosaccharomyces pombe (strain 972 / ATCC 24843) (Fission yeast).